A 240-amino-acid chain; its full sequence is Transcriptional regulatory protein BaeR (240 aa).

In terms of domain architecture, Response regulatory spans Arg-12–Leu-125. The residue at position 61 (Asp-61) is a 4-aspartylphosphate. Positions Gln-131 to Ala-234 form a DNA-binding region, ompR/PhoB-type.

Post-translationally, phosphorylated by BaeS.

The protein resides in the cytoplasm. Member of the two-component regulatory system BaeS/BaeR. Activates the mdtABCD operon. This Escherichia coli O6:H1 (strain CFT073 / ATCC 700928 / UPEC) protein is Transcriptional regulatory protein BaeR (baeR).